The chain runs to 604 residues: Protein TAX4 (604 aa).

Disordered stretches follow at residues 38–77 (HPNG…PRSI), 132–249 (SFSN…RQQE), 267–299 (GTLP…QQEN), 338–380 (DETF…KGLK), and 394–428 (PFPH…NEDK). The span at 176–185 (YDNNVRSRSI) shows a compositional bias: polar residues. Composition is skewed to low complexity over residues 186–203 (SPQV…SISS) and 224–240 (SMSS…KASL). Composition is skewed to basic residues over residues 276-290 (SQRK…HRLL), 366-379 (KKKK…KKGL), and 396-421 (PHHH…HTSS). Residues 469–559 (ANEDDESHLQ…RVWNSVDGYV (91 aa)) form the EH domain.

Belongs to the IRS4 family. Interacts with INP51.

With IRS4, acts as a positive regulator of INP51 activity and phosphatidylinositol 4,5-bisphosphate turnover. Negatively regulates signaling through the cell integrity pathway, including the MAP kinase SLT2. The chain is Protein TAX4 (TAX4) from Saccharomyces cerevisiae (strain ATCC 204508 / S288c) (Baker's yeast).